Consider the following 229-residue polypeptide: NAD(P)H-hydrate epimerase (229 aa).

Positions 10-224 constitute a YjeF N-terminal domain; the sequence is SREVDQIAIE…DIGIPPALLD (215 aa). Residue 57–61 participates in (6S)-NADPHX binding; that stretch reads NNGGD. Positions 58 and 129 each coordinate K(+). (6S)-NADPHX-binding positions include 133–139 and aspartate 167; that span reads GTGIRGQ. Serine 170 contributes to the K(+) binding site.

This sequence belongs to the NnrE/AIBP family. Requires K(+) as cofactor.

The enzyme catalyses (6R)-NADHX = (6S)-NADHX. It carries out the reaction (6R)-NADPHX = (6S)-NADPHX. In terms of biological role, catalyzes the epimerization of the S- and R-forms of NAD(P)HX, a damaged form of NAD(P)H that is a result of enzymatic or heat-dependent hydration. This is a prerequisite for the S-specific NAD(P)H-hydrate dehydratase to allow the repair of both epimers of NAD(P)HX. This is NAD(P)H-hydrate epimerase from Rubinisphaera brasiliensis (strain ATCC 49424 / DSM 5305 / JCM 21570 / IAM 15109 / NBRC 103401 / IFAM 1448) (Planctomyces brasiliensis).